Consider the following 200-residue polypeptide: Peptidyl-tRNA hydrolase (200 aa).

A tRNA-binding site is contributed by Tyr15. The active-site Proton acceptor is His20. Phe66, Asn68, and Asn114 together coordinate tRNA.

This sequence belongs to the PTH family. As to quaternary structure, monomer.

The protein localises to the cytoplasm. The enzyme catalyses an N-acyl-L-alpha-aminoacyl-tRNA + H2O = an N-acyl-L-amino acid + a tRNA + H(+). In terms of biological role, hydrolyzes ribosome-free peptidyl-tRNAs (with 1 or more amino acids incorporated), which drop off the ribosome during protein synthesis, or as a result of ribosome stalling. Functionally, catalyzes the release of premature peptidyl moieties from peptidyl-tRNA molecules trapped in stalled 50S ribosomal subunits, and thus maintains levels of free tRNAs and 50S ribosomes. This is Peptidyl-tRNA hydrolase from Ralstonia nicotianae (strain ATCC BAA-1114 / GMI1000) (Ralstonia solanacearum).